A 697-amino-acid chain; its full sequence is Zinc finger and BTB domain-containing protein 24 (697 aa).

Residues 10–133 (GQLVVHSDAH…AYTDFQNNHS (124 aa)) enclose the BTB domain. Over residues 131–142 (NHSSPKPTTLNT) the composition is skewed to polar residues. Disordered stretches follow at residues 131–176 (NHSS…EEKS) and 209–254 (EQIA…SRYS). The segment at residues 159–171 (KRKRGRPKKVNTL) is a DNA-binding region (a.T hook). Positions 212 to 245 (AAKEKEESEPTCEPSREEEMPVEKDENYDPKTED) are enriched in basic and acidic residues. 8 C2H2-type zinc fingers span residues 294 to 316 (ARCK…QRSH), 322 to 344 (FKCN…TRMH), 350 to 372 (YTCT…MSLH), 378 to 400 (FTCD…YRVH), 406 to 428 (PECK…LRTH), 434 to 456 (FTCE…IRIH), 462 to 484 (YSCG…CILH), and 490 to 512 (FSCP…LKIH). Positions 652–697 (QEQTEELHLATSTSDPAQHLQLTQEPGPPPPTHHVPQPTPLGQEQS) are disordered. The segment covering 677-690 (PGPPPPTHHVPQPT) has biased composition (pro residues).

The protein belongs to the krueppel C2H2-type zinc-finger protein family. Interacts with MN1. As to expression, widely expressed, with highest levels in naive B-cells.

It localises to the nucleus. Functionally, may be involved in BMP2-induced transcription. This chain is Zinc finger and BTB domain-containing protein 24 (ZBTB24), found in Homo sapiens (Human).